Consider the following 202-residue polypeptide: MAEVSRDSEAAERGPEGSSPEAVPGDATIPRVKLLDAIVDTFLQKLVADRSYERFTTCYKHFHQLNPEVTQRIYDKFVAQLQTSIREEISEIKEEGNLEAVLNSLDKIIEEGRERGEPAWRPSGIPEKDLCSVMAPYFLKQQDTLCHQVRKQEAKNQELADAVLAGRRQVEELQQQVRALQQTWQALHREQRELLSVLRAPE.

Over residues 1–15 (MAEVSRDSEAAERGP) the composition is skewed to basic and acidic residues. The disordered stretch occupies residues 1–26 (MAEVSRDSEAAERGPEGSSPEAVPGD). Residues 153–194 (EAKNQELADAVLAGRRQVEELQQQVRALQQTWQALHREQREL) adopt a coiled-coil conformation.

Component of the MIS12 complex composed of MIS12, DSN1, NSL1 and PMF1. Interacts with COPS7A. Interacts via its coiled-coil domain with the leucine-zipper domain of NFE2L2. The interaction with NFE2L2 is required for the transcriptional regulation of SSAT.

Its subcellular location is the nucleus. The protein resides in the chromosome. It is found in the centromere. The protein localises to the kinetochore. In terms of biological role, part of the MIS12 complex which is required for normal chromosome alignment and segregation and for kinetochore formation during mitosis. May act as a cotranscription partner of NFE2L2 involved in regulation of polyamine-induced transcription of SSAT. In Mus musculus (Mouse), this protein is Polyamine-modulated factor 1.